We begin with the raw amino-acid sequence, 142 residues long: Large ribosomal subunit protein uL11 (142 aa).

This sequence belongs to the universal ribosomal protein uL11 family. Part of the ribosomal stalk of the 50S ribosomal subunit. Interacts with L10 and the large rRNA to form the base of the stalk. L10 forms an elongated spine to which L12 dimers bind in a sequential fashion forming a multimeric L10(L12)X complex. One or more lysine residues are methylated.

In terms of biological role, forms part of the ribosomal stalk which helps the ribosome interact with GTP-bound translation factors. The polypeptide is Large ribosomal subunit protein uL11 (Akkermansia muciniphila (strain ATCC BAA-835 / DSM 22959 / JCM 33894 / BCRC 81048 / CCUG 64013 / CIP 107961 / Muc)).